The primary structure comprises 210 residues: 3-hexulose-6-phosphate synthase (210 aa).

It belongs to the HPS/KGPDC family. HPS subfamily.

The catalysed reaction is D-ribulose 5-phosphate + formaldehyde = D-arabino-hex-3-ulose 6-phosphate. It participates in one-carbon metabolism; formaldehyde assimilation via RuMP pathway; D-fructose 6-phosphate from D-ribulose 5-phosphate and formaldehyde: step 1/2. Its function is as follows. Catalyzes the condensation of ribulose 5-phosphate with formaldehyde to form 3-hexulose 6-phosphate. The polypeptide is 3-hexulose-6-phosphate synthase (Staphylococcus aureus (strain MRSA252)).